A 132-amino-acid chain; its full sequence is Small ribosomal subunit protein uS11 (132 aa).

The protein belongs to the universal ribosomal protein uS11 family. In terms of assembly, part of the 30S ribosomal subunit. Interacts with proteins S7 and S18. Binds to IF-3.

In terms of biological role, located on the platform of the 30S subunit, it bridges several disparate RNA helices of the 16S rRNA. Forms part of the Shine-Dalgarno cleft in the 70S ribosome. This Chlamydia trachomatis serovar L2 (strain ATCC VR-902B / DSM 19102 / 434/Bu) protein is Small ribosomal subunit protein uS11.